The following is a 276-amino-acid chain: Thiazole synthase (276 aa).

The active-site Schiff-base intermediate with DXP is the lysine 117. 1-deoxy-D-xylulose 5-phosphate contacts are provided by residues glycine 178, alanine 204 to glycine 205, and asparagine 226 to threonine 227.

This sequence belongs to the ThiG family. In terms of assembly, homotetramer. Forms heterodimers with either ThiH or ThiS.

It localises to the plastid. It is found in the chloroplast. The catalysed reaction is [ThiS sulfur-carrier protein]-C-terminal-Gly-aminoethanethioate + 2-iminoacetate + 1-deoxy-D-xylulose 5-phosphate = [ThiS sulfur-carrier protein]-C-terminal Gly-Gly + 2-[(2R,5Z)-2-carboxy-4-methylthiazol-5(2H)-ylidene]ethyl phosphate + 2 H2O + H(+). It participates in cofactor biosynthesis; thiamine diphosphate biosynthesis. Catalyzes the rearrangement of 1-deoxy-D-xylulose 5-phosphate (DXP) to produce the thiazole phosphate moiety of thiamine. Sulfur is provided by the thiocarboxylate moiety of the carrier protein ThiS. In vitro, sulfur can be provided by H(2)S. In Gracilaria tenuistipitata var. liui (Red alga), this protein is Thiazole synthase.